Reading from the N-terminus, the 368-residue chain is Probable auxin efflux carrier component 5b (368 aa).

The next 10 membrane-spanning stretches (helical) occupy residues 7 to 27 (VYKVVAAMAPLYFALGLGYGS), 39 to 59 (CDAVNRLVACFAVPFFAFDFA), 71 to 91 (VLAADALSKLAVALALAACAA), 114 to 134 (CITGFSLATLNNTLVVGVPLL), 145 to 165 (LIVQISVVQTIVYFPLLLLAF), 227 to 247 (VLGVAWACVTNRWHVETPSII), 251 to 271 (VLIMSKTGVGLSMFSMGLFMA), 286 to 306 (LGMALRFVAGPAATAVGAFAL), 312 to 332 (LLRLAIIQAALPQSITTFVFA), and 347 to 367 (IFGTLASLPVLIVYYIVLGFI).

It belongs to the auxin efflux carrier (TC 2.A.69.1) family. Expressed at low levels in roots and shoot apex.

It localises to the membrane. Functionally, may act as a component of the auxin efflux carrier. This chain is Probable auxin efflux carrier component 5b, found in Oryza sativa subsp. japonica (Rice).